A 234-amino-acid polypeptide reads, in one-letter code: 1-(5-phosphoribosyl)-5-[(5-phosphoribosylamino)methylideneamino] imidazole-4-carboxamide isomerase (234 aa).

Asp9 functions as the Proton acceptor in the catalytic mechanism. Asp131 acts as the Proton donor in catalysis.

Belongs to the HisA/HisF family.

It localises to the cytoplasm. The enzyme catalyses 1-(5-phospho-beta-D-ribosyl)-5-[(5-phospho-beta-D-ribosylamino)methylideneamino]imidazole-4-carboxamide = 5-[(5-phospho-1-deoxy-D-ribulos-1-ylimino)methylamino]-1-(5-phospho-beta-D-ribosyl)imidazole-4-carboxamide. It functions in the pathway amino-acid biosynthesis; L-histidine biosynthesis; L-histidine from 5-phospho-alpha-D-ribose 1-diphosphate: step 4/9. The chain is 1-(5-phosphoribosyl)-5-[(5-phosphoribosylamino)methylideneamino] imidazole-4-carboxamide isomerase from Staphylococcus aureus (strain JH1).